Reading from the N-terminus, the 309-residue chain is Calcium homeostasis modulator protein 5 (309 aa).

At 1–15 the chain is on the cytoplasmic side; that stretch reads MDAFQGILKFFLNQK. 3 residues coordinate a 1,2-diacyl-sn-glycero-3-phosphate: lysine 15, arginine 32, and valine 37. Residues 16–37 traverse the membrane as a helical segment; sequence TVIGYSFMALLTVGSERLFSVV. Topologically, residues 38 to 45 are extracellular; it reads AFKCPCST. Disulfide bonds link cysteine 41-cysteine 127, cysteine 43-cysteine 158, and cysteine 142-cysteine 149. A helical membrane pass occupies residues 46–70; that stretch reads ENMTYGLVFLFAPAWVLLILGFFLN. Residues 71-99 lie on the Cytoplasmic side of the membrane; it reads NRSWRLFTGCCVNPRKIFPRGHSCRFFYV. A helical transmembrane segment spans residues 100 to 129; sequence LGQITLSSLVAPVMWLSVALLNGTFYECAM. Glutamine 102 and asparagine 121 together coordinate a 1,2-diacyl-sn-glycero-3-phosphate. Over 130 to 174 the chain is Extracellular; sequence SGTRSSGLLELICKGKPKECWEELHKVSCGKTSMLPTVNEELKLS. The helical transmembrane segment at 175–200 threads the bilayer; sequence LQAQSQILGWCLICSASFFSLLTTCY. Topologically, residues 201-309 are cytoplasmic; that stretch reads ARCRSKVSYL…MVLVGTAHNM (109 aa). An a 1,2-diacyl-sn-glycero-3-phosphate-binding site is contributed by arginine 202.

The protein belongs to the CALHM family. As to quaternary structure, oligomerizes to form undecameric cone-shaped channels.

The protein resides in the membrane. Its function is as follows. May assemble to form large pore channels with gating and ion conductance likely regulated by membrane lipids. The sequence is that of Calcium homeostasis modulator protein 5 from Homo sapiens (Human).